The primary structure comprises 206 residues: Triosephosphate isomerase (206 aa).

H76 functions as the Electrophile in the catalytic mechanism. The active-site Proton acceptor is E146.

It belongs to the triosephosphate isomerase family. Homodimer.

It catalyses the reaction D-glyceraldehyde 3-phosphate = dihydroxyacetone phosphate. Its pathway is carbohydrate biosynthesis; gluconeogenesis. It participates in carbohydrate degradation; glycolysis; D-glyceraldehyde 3-phosphate from glycerone phosphate: step 1/1. In Anopheles merus (Mosquito), this protein is Triosephosphate isomerase (Tpi).